The primary structure comprises 797 residues: Plakophilin-3 (797 aa).

Residues 58-81 (GQQSRHNGSAELDGSAESARGMPR) are disordered. Position 81 is an omega-N-methylarginine (Arg-81). Phosphoserine is present on residues Ser-123, Ser-180, and Ser-183. Tyr-195 carries the post-translational modification Phosphotyrosine. Residues 219 to 228 (ASSGSSRAGG) show a composition bias toward low complexity. The disordered stretch occupies residues 219 to 241 (ASSGSSRAGGLDWPEATEGPPSR). Ser-240 is modified (phosphoserine). Thr-250 carries the post-translational modification Phosphothreonine. Residues 253–274 (RFQSSHRSRGGTGSVSGAGLEP) are disordered. An Omega-N-methylarginine modification is found at Arg-261. Residues 283–288 (SLSLSL) are required for interaction with SFN. Residues Ser-285, Ser-313, Ser-314, and Ser-331 each carry the phosphoserine modification. The segment at 294–724 (LPDVRGLDSY…AEVLVNIIAV (431 aa)) is required for interaction with GSK3B. ARM repeat units follow at residues 305–348 (GHRT…HRCY), 351–390 (AAAK…NLIY), 393–432 (VDNK…NLSS), 449–487 (TDLV…NLSS), 491–536 (ATRQ…NLSY), 596–637 (PKGL…NITA), 645–684 (VLSR…NLSR), and 689–730 (KDEM…NLVV). Residues 516–797 (VGKCEDKSVE…GYRKEDFLGP (282 aa)) form a required for binding to PKP2 mRNA region.

Belongs to the beta-catenin family. In terms of assembly, found in a complex composed of CDH1, RAP1A and PKP3; PKP3 acts as a scaffold protein within the complex, the complex is required for CDH1 localization to mature desmosome cell junctions. Interacts with FXR1; the interaction facilitates the binding of PKP3 to PKP2 mRNA. Interacts (via ARM repeats) with GSK3B; the interaction may be involved in PKP3 protein degradation. Interacts with hyperphosphorylated and hypophosphorylated RB1; the interaction inhibits RB1 interaction with and repression of the transcription factor E2F1, potentially via sequestering RB1 to the cytoplasm. Interacts with CDKN1A; the interaction sequesters CDKN1A to the cytoplasm thereby repressing its role as an inhibitor of CDK4- and CDK6-driven RB1 phosphorylation. Interacts (via N-terminus) with SFN; the interaction maintains the cytoplasmic pool of PKP3, facilitates PKP3 exchange at desmosomes and restricts PKP3 localization to existing desmosome cell junctions. Interacts (via N-terminus) with JUP; the interaction is required for PKP3 localization to desmosome cell-cell junctions. Post-translationally, phosphorylated at Ser-285 when localized to the cytoplasm, PKP3 at desmosome cell junctions is not phosphorylated. Phosphorylation at Try-195 by SRC is induced by reactive oxygen species and potentially acts as a release mechanism from desmosome cell-cell junctions. In terms of tissue distribution, expressed in all layers of the epidermis, but is most abundant in the basal layer (at protein level). Expressed in keratinocytes of the epidermis at birth (at protein level). Expressed in the anagen non-keratinized inner root sheath cuticle and hair cuticle (at protein level). Also expressed in the matrix, precursors of the inner root sheath and hair shaft lineages (at protein level). Expressed at apical membranes in the outer hair root sheath and basal layer keratinocytes (at protein level). Expressed in intestinal epithelial cells and lamina propria of the ileum (at protein level). Expressed in keratinocytes (at protein level).

It localises to the nucleus. It is found in the cell junction. Its subcellular location is the desmosome. The protein localises to the cytoplasm. The protein resides in the cell membrane. It localises to the adherens junction. In terms of biological role, a component of desmosome cell-cell junctions which are required for positive regulation of cellular adhesion. Required for the localization of DSG2, DSP and PKP2 to mature desmosome junctions. May also play a role in the maintenance of DSG3 protein abundance in keratinocytes. Required for the formation of DSP-containing desmosome precursors in the cytoplasm during desmosome assembly. Also regulates the accumulation of CDH1 to mature desmosome junctions, via cAMP-dependent signaling and its interaction with activated RAP1A. Positively regulates the stabilization of PKP2 mRNA and therefore protein abundance, via its interaction with FXR1, may also regulate the protein abundance of DSP via the same mechanism. May also regulate the protein abundance of the desmosome component PKP1. Required for the organization of desmosome junctions at intercellular borders between basal keratinocytes of the epidermis, as a result plays a role in maintenance of the dermal barrier and regulation of the dermal inflammatory response. Required during epidermal keratinocyte differentiation for cell adherence at tricellular cell-cell contacts, via regulation of the timely formation of adherens junctions and desmosomes in a calcium-dependent manner, and may also play a role in the organization of the intracellular actin fiber belt. Acts as a negative regulator of the inflammatory response in hematopoietic cells of the skin and intestine, via modulation of proinflammatory cytokine production. Important for epithelial barrier maintenance in the intestine to reduce intestinal permeability, thereby plays a role in protection from intestinal-derived endotoxemia. Required for the development of hair follicles, via a role in the regulation of inner root sheaf length, correct alignment and anterior-posterior polarity of hair follicles. Promotes proliferation and cell-cycle G1/S phase transition of keratinocytes. Promotes E2F1-driven transcription of G1/S phase promoting genes by acting to release E2F1 from its inhibitory interaction with RB1, via sequestering RB1 and CDKN1A to the cytoplasm and thereby increasing CDK4- and CDK6-driven phosphorylation of RB1. May act as a scaffold protein to facilitate MAPK phosphorylation of RPS6KA protein family members and subsequently promote downstream EGFR signaling. May play a role in the positive regulation of transcription of Wnt-mediated TCF-responsive target genes. The protein is Plakophilin-3 (Pkp3) of Mus musculus (Mouse).